The primary structure comprises 347 residues: Phosphate acyltransferase (347 aa).

It belongs to the PlsX family. In terms of assembly, homodimer. Probably interacts with PlsY.

It is found in the cytoplasm. The enzyme catalyses a fatty acyl-[ACP] + phosphate = an acyl phosphate + holo-[ACP]. Its pathway is lipid metabolism; phospholipid metabolism. Functionally, catalyzes the reversible formation of acyl-phosphate (acyl-PO(4)) from acyl-[acyl-carrier-protein] (acyl-ACP). This enzyme utilizes acyl-ACP as fatty acyl donor, but not acyl-CoA. The polypeptide is Phosphate acyltransferase (Rhizobium meliloti (strain 1021) (Ensifer meliloti)).